Here is a 601-residue protein sequence, read N- to C-terminus: Nuclear envelope protein ndc1 (601 aa).

Residues Met-1–Ala-34 are Cytoplasmic-facing. A helical membrane pass occupies residues Cys-35–Ile-55. The Perinuclear space portion of the chain corresponds to Ser-56–Ser-58. A helical membrane pass occupies residues Phe-59–Val-79. The Cytoplasmic segment spans residues Met-80 to Lys-106. The helical transmembrane segment at Ser-107–Ile-127 threads the bilayer. Over Lys-128–Arg-153 the chain is Perinuclear space. The chain crosses the membrane as a helical span at residues Phe-154–Tyr-174. Topologically, residues Leu-175–Arg-182 are cytoplasmic. Residues Pro-183–Phe-203 traverse the membrane as a helical segment. Over Ser-204–Leu-256 the chain is Perinuclear space. A helical membrane pass occupies residues Leu-257–Phe-277. The Cytoplasmic portion of the chain corresponds to Arg-278–Ser-601.

The protein belongs to the NDC1 family. As to quaternary structure, component of the nuclear pore complex (NPC). NPC constitutes the exclusive means of nucleocytoplasmic transport. NPCs allow the passive diffusion of ions and small molecules and the active, nuclear transport receptor-mediated bidirectional transport of macromolecules such as proteins, RNAs, ribonucleoparticles (RNPs), and ribosomal subunits across the nuclear envelope. Due to its 8-fold rotational symmetry, all subunits are present with 8 copies or multiples thereof.

It is found in the nucleus. It localises to the nuclear pore complex. Its subcellular location is the nucleus membrane. The protein resides in the cytoplasm. The protein localises to the cytoskeleton. It is found in the microtubule organizing center. It localises to the spindle pole body. Component of the nuclear pore complex (NPC) and the spindle pole body (SPB), which plays a key role in de novo assembly and insertion of both structures in the nuclear envelope. Involved in the formation of the bipolar mitotic spindle. Anchors the spindle pole body in the nuclear envelope. The chain is Nuclear envelope protein ndc1 (cut11) from Schizosaccharomyces pombe (strain 972 / ATCC 24843) (Fission yeast).